The chain runs to 403 residues: MLKTDVVVIGAGPAGSMAAKHAALGGANVVLIDKKSEIGTPKRCAEGVYDEGFKWLNIEPDERWIAQRIYGATLHSPDGNSFTVTSEDVPVQGFILERKVFDKHMAMDAARAGAKIMIKTLVTDIKRNENGFILSCDSIEGTIEVEAKIAICADGPESIMAKKLGINSTTPQNMMSCAQFEMCNVDYNDDEKIEFYLGQDVALKGYAWIFPKGNGVANVGLGVTGNTDKTAYEYIMDFIEKCPATKNAQPIEMNIGGDPINGLIEKIYDDNLLICGDAAGQVNPIEGGGIIEGMLGGMAAGDVAAKAIKEENYSKERLHEYYEKYSELSFNLIETLPAARDIVYSFTDDEYNKIISVANTIDLKNISKRDVLKVVFKLPPTLTTKLIKLLKIVFPKQMKSILF.

Positions 14, 33, 44, 45, 47, 98, 122, 277, 289, and 290 each coordinate FAD.

Belongs to the geranylgeranyl reductase family. DGGGPL reductase subfamily. FAD is required as a cofactor.

It catalyses the reaction a 2,3-bis-O-phytanyl-sn-glycerol 1-phospholipid + 8 A = a 2,3-bis-O-(geranylgeranyl)-sn-glycerol 1-phospholipid + 8 AH2. It carries out the reaction 2,3-bis-O-(phytanyl)-sn-glycerol 1-phosphate + 8 A = 2,3-bis-O-(geranylgeranyl)-sn-glycerol 1-phosphate + 8 AH2. The enzyme catalyses CDP-2,3-bis-O-(geranylgeranyl)-sn-glycerol + 8 AH2 = CDP-2,3-bis-O-(phytanyl)-sn-glycerol + 8 A. The catalysed reaction is archaetidylserine + 8 AH2 = 2,3-bis-O-phytanyl-sn-glycero-3-phospho-L-serine + 8 A. The protein operates within membrane lipid metabolism; glycerophospholipid metabolism. Its function is as follows. Is involved in the reduction of 2,3-digeranylgeranylglycerophospholipids (unsaturated archaeols) into 2,3-diphytanylglycerophospholipids (saturated archaeols) in the biosynthesis of archaeal membrane lipids. Catalyzes the formation of archaetidic acid (2,3-di-O-phytanyl-sn-glyceryl phosphate) from 2,3-di-O-geranylgeranylglyceryl phosphate (DGGGP) via the hydrogenation of each double bond of the isoprenoid chains. Is also probably able to reduce double bonds of geranyl groups in CDP-2,3-bis-O-(geranylgeranyl)-sn-glycerol and archaetidylserine, thus acting at various stages in the biosynthesis of archaeal membrane lipids. The protein is Digeranylgeranylglycerophospholipid reductase 1 of Methanosphaera stadtmanae (strain ATCC 43021 / DSM 3091 / JCM 11832 / MCB-3).